The primary structure comprises 482 residues: Lipoamide acyltransferase component of branched-chain alpha-keto acid dehydrogenase complex, mitochondrial (482 aa).

A mitochondrion-targeting transit peptide spans Met1–Gln61. The region spanning Ile64 to Glu139 is the Lipoyl-binding domain. Position 105 is an N6-lipoyllysine (Lys105). Lys133 carries the N6-succinyllysine modification. Residues Asp145 to Glu160 form a critical for association with PPM1K region. The segment at Ser146–Thr171 is disordered. The segment covering Ser157–Gly168 has biased composition (basic and acidic residues). Positions Leu172–Leu209 constitute a Peripheral subunit-binding (PSBD) domain. N6-acetyllysine; alternate is present on Lys196. Lys196 bears the N6-succinyllysine; alternate mark. At Lys202 the chain carries N6-acetyllysine. The span at Pro218 to Pro230 shows a compositional bias: pro residues. A disordered region spans residues Pro218–Pro238. Ser220 is modified (phosphoserine). Residues Lys243 and Lys250 each carry the N6-acetyllysine modification. Lys261 is subject to N6-succinyllysine. An N6-acetyllysine; alternate modification is found at Lys289. Lys289 carries the post-translational modification N6-succinyllysine; alternate. Arg291 is a CoA binding site. An N6-acetyllysine mark is found at Lys295 and Lys304. CoA-binding residues include Ser306, Asp349, Gln378, Ser399, Asn400, Ser403, Gly424, and Ile426. At Lys435 the chain carries N6-acetyllysine. Residue Lys440 is modified to N6-acetyllysine; alternate. Lys440 carries the post-translational modification N6-succinyllysine; alternate. Residues His452 and Asp456 contribute to the active site.

This sequence belongs to the 2-oxoacid dehydrogenase family. Forms a 24-polypeptide structural core with octahedral symmetry that represents the E2 component of the branched-chain alpha-ketoacid dehydrogenase (BCKDH) complex. The BCKDH complex is composed of three major building blocks E1, E2 and E3. It is organized around E2, a 24-meric cubic core composed of DBT, to which are associated 6 to 12 copies of E1, and approximately 6 copies of the dehydrogenase E3, a DLD dimer. Interacts with PPM1K with a 24:1 stoichiometry; the N-terminal region (residues 49-61) of PPM1K and C-terminal linker of the lipoyl domain of DBT/E2 (residues 145-160) are critical for this interaction whereas the lipoyl prosthetic group is dispensable. This interaction requires colocalization in mitochondria. PPM1K competes with BCKDK for binding to DBT; this interaction is modulated by branched-chain alpha-keto acids (BCKAs). At steady state, BCKDH holoenzyme preferentially binds BCKDK and BCKDHA is phosphorylated. In response to high levels of BCKAs, BCKDK is replaced by PPM1K leading to BCKDHA dephosphorylation. Requires (R)-lipoate as cofactor. As to expression, expressed in kidney (at protein level).

Its subcellular location is the mitochondrion matrix. It catalyses the reaction N(6)-[(R)-dihydrolipoyl]-L-lysyl-[protein] + 2-methylpropanoyl-CoA = N(6)-[(R)-S(8)-2-methylpropanoyldihydrolipoyl]-L-lysyl-[protein] + CoA. The branched-chain alpha-keto dehydrogenase complex catalyzes the overall conversion of alpha-keto acids to acyl-CoA and CO(2). It contains multiple copies of three enzymatic components: branched-chain alpha-keto acid decarboxylase (E1), lipoamide acyltransferase (E2) and lipoamide dehydrogenase (E3). Within this complex, the catalytic function of this enzyme is to accept, and to transfer to coenzyme A, acyl groups that are generated by the branched-chain alpha-keto acid decarboxylase component. This Bos taurus (Bovine) protein is Lipoamide acyltransferase component of branched-chain alpha-keto acid dehydrogenase complex, mitochondrial (DBT).